Reading from the N-terminus, the 172-residue chain is Adenylate kinase isoenzyme 6 (172 aa).

5 residues coordinate ATP: Gly13, Gly15, Lys16, Thr17, and Thr18. The interval 33–56 (NVGDLAREGQLYDGYDEEYDCPIL) is NMPbind. Positions 108–118 (NRGYNEKKLKD) are LID. The ATP site is built by Arg109 and Lys148.

It belongs to the adenylate kinase family. AK6 subfamily. As to quaternary structure, monomer and homodimer. Interacts with small ribosomal subunit protein uS11. Not a structural component of 43S pre-ribosomes, but transiently interacts with them by binding to uS11. Interacts with COIL (via C-terminus).

The protein resides in the cytoplasm. Its subcellular location is the nucleus. The protein localises to the nucleoplasm. It localises to the cajal body. The catalysed reaction is AMP + ATP = 2 ADP. It catalyses the reaction ATP + H2O = ADP + phosphate + H(+). Broad-specificity nucleoside monophosphate (NMP) kinase that catalyzes the reversible transfer of the terminal phosphate group between nucleoside triphosphates and monophosphates. Also has ATPase activity. Involved in the late cytoplasmic maturation steps of the 40S ribosomal particles, specifically 18S rRNA maturation. While NMP activity is not required for ribosome maturation, ATPase activity is. Associates transiently with small ribosomal subunit protein uS11. ATP hydrolysis breaks the interaction with uS11. May temporarily remove uS11 from the ribosome to enable a conformational change of the ribosomal RNA that is needed for the final maturation step of the small ribosomal subunit. Its NMP activity may have a role in nuclear energy homeostasis. May be involved in regulation of Cajal body (CB) formation. In Bos taurus (Bovine), this protein is Adenylate kinase isoenzyme 6.